The chain runs to 105 residues: MQVLLIATLVASVLAAPTEVSPQTSGGGGGGGGGGGVCRGFLYSNPICCATDILGLACLDGDTPPETPRDAKNFKEICAKNGQQARCCVLPIIDQAVLCIRPLGV.

An N-terminal signal peptide occupies residues 1–15 (MQVLLIATLVASVLA). Disulfide bonds link Cys38–Cys87, Cys48–Cys78, Cys49–Cys58, and Cys88–Cys99.

It belongs to the cerato-ulmin hydrophobin family. As to quaternary structure, homotetramer. Further self-assembles to form highly ordered films at water-air interfaces through intermolecular interactions.

It localises to the secreted. The protein resides in the cell wall. Functionally, aerial growth, conidiation, and dispersal of filamentous fungi in the environment rely upon a capability of their secreting small amphipathic proteins called hydrophobins (HPBs) with low sequence identity. Class I can self-assemble into an outermost layer of rodlet bundles on aerial cell surfaces, conferring cellular hydrophobicity that supports fungal growth, development and dispersal; whereas Class II form highly ordered films at water-air interfaces through intermolecular interactions but contribute nothing to the rodlet structure. HYD1 is a class II hydrophobin that plays roles in conidiation and cuticle-bypassing infection by regulating the transcripts of frequency clock protein frq, and velvet protein vosA, as well as primordium formation via the mitogen-activated protein kinase signaling pathway. Also participates in stress response, including tolerance of mycelia to osmotic and oxidative stresses, and conidia to high or low temperature. Acts as a defensive factor against Calcarisporium cordycipiticola infection, probably via the formation of a physical barrier to inhibit the pathogen infection owing to its hydrophobicity or binding to the effector of C.cordycipiticola, hindering the recognition of the pathogen. Finally, regulates the transcription of the AreA transcription factor at different developmental stages via a positive feedback loop. This chain is Class II hydrophobin 1, found in Cordyceps militaris (Caterpillar fungus).